Reading from the N-terminus, the 189-residue chain is Chitin synthase 1 (189 aa).

Belongs to the chitin synthase family. Class I subfamily.

The protein resides in the cell membrane. The enzyme catalyses [(1-&gt;4)-N-acetyl-beta-D-glucosaminyl](n) + UDP-N-acetyl-alpha-D-glucosamine = [(1-&gt;4)-N-acetyl-beta-D-glucosaminyl](n+1) + UDP + H(+). In terms of biological role, polymerizes chitin, a structural polymer of the cell wall and septum, by transferring the sugar moiety of UDP-GlcNAc to the non-reducing end of the growing chitin polymer. This chain is Chitin synthase 1 (chs1), found in Aspergillus niger.